A 283-amino-acid chain; its full sequence is Bifunctional protein FolD (283 aa).

NADP(+) contacts are provided by residues 165-167 (GRS) and Ser190.

Belongs to the tetrahydrofolate dehydrogenase/cyclohydrolase family. In terms of assembly, homodimer.

The enzyme catalyses (6R)-5,10-methylene-5,6,7,8-tetrahydrofolate + NADP(+) = (6R)-5,10-methenyltetrahydrofolate + NADPH. It catalyses the reaction (6R)-5,10-methenyltetrahydrofolate + H2O = (6R)-10-formyltetrahydrofolate + H(+). It functions in the pathway one-carbon metabolism; tetrahydrofolate interconversion. Its function is as follows. Catalyzes the oxidation of 5,10-methylenetetrahydrofolate to 5,10-methenyltetrahydrofolate and then the hydrolysis of 5,10-methenyltetrahydrofolate to 10-formyltetrahydrofolate. This chain is Bifunctional protein FolD, found in Methylibium petroleiphilum (strain ATCC BAA-1232 / LMG 22953 / PM1).